The following is a 208-amino-acid chain: Probable DNA-3-methyladenine glycosylase (208 aa).

This sequence belongs to the DNA glycosylase MPG family.

It localises to the nucleus. The catalysed reaction is Hydrolysis of alkylated DNA, releasing 3-methyladenine, 3-methylguanine, 7-methylguanine and 7-methyladenine.. In terms of biological role, hydrolysis of the deoxyribose N-glycosidic bond to excise 3-methyladenine, and 7-methylguanine from the damaged DNA polymer formed by alkylation lesions. The sequence is that of Probable DNA-3-methyladenine glycosylase from Encephalitozoon cuniculi (strain GB-M1) (Microsporidian parasite).